A 66-amino-acid chain; its full sequence is Beta-mammal toxin Co3 (66 aa).

The region spanning 1-66 is the LCN-type CS-alpha/beta domain; sequence KEGYIVNYYD…VWPLPNKTCN (66 aa). Cystine bridges form between cysteine 12-cysteine 65, cysteine 16-cysteine 41, cysteine 25-cysteine 46, and cysteine 29-cysteine 48.

In terms of tissue distribution, expressed by the venom gland.

It localises to the secreted. Beta toxins bind voltage-independently at site-4 of sodium channels (Nav) and shift the voltage of activation toward more negative potentials thereby affecting sodium channel activation and promoting spontaneous and repetitive firing. This toxin acts on human Nav1.2/SCN2A, Nav1.4/SCN4A and Nav1.6/SCN8A voltage-gated sodium channels. Also, it reduces the peak of sodium currents in Nav1.5/SCN5A at all potentials. In vivo, is lethal to mice when intraperitoneally injected at a dose of 5ug. No activity is observed when injected into crickets or woodlice. The polypeptide is Beta-mammal toxin Co3 (Centruroides ornatus (Scorpion)).